Consider the following 350-residue polypeptide: tRNA pseudouridine synthase D (350 aa).

Residue F27 participates in substrate binding. The active-site Nucleophile is the D80. Residue N129 participates in substrate binding. Residues 155–303 (GVPNYFGVQR…VDTTRRAINL (149 aa)) enclose the TRUD domain. F329 is a binding site for substrate.

It belongs to the pseudouridine synthase TruD family.

It carries out the reaction uridine(13) in tRNA = pseudouridine(13) in tRNA. Its function is as follows. Responsible for synthesis of pseudouridine from uracil-13 in transfer RNAs. The chain is tRNA pseudouridine synthase D from Proteus mirabilis (strain HI4320).